A 560-amino-acid polypeptide reads, in one-letter code: Arginine--tRNA ligase (560 aa).

The short motif at 121–131 (PNIAKPFSMGH) is the 'HIGH' region element.

It belongs to the class-I aminoacyl-tRNA synthetase family. In terms of assembly, monomer.

It is found in the cytoplasm. It carries out the reaction tRNA(Arg) + L-arginine + ATP = L-arginyl-tRNA(Arg) + AMP + diphosphate. This Exiguobacterium sp. (strain ATCC BAA-1283 / AT1b) protein is Arginine--tRNA ligase.